The chain runs to 1367 residues: DNA polymerase III PolC-type (1367 aa).

Positions 358–513 (FVVLDFETTG…DDARVTAQVF (156 aa)) constitute an Exonuclease domain.

It belongs to the DNA polymerase type-C family. PolC subfamily.

It localises to the cytoplasm. It catalyses the reaction DNA(n) + a 2'-deoxyribonucleoside 5'-triphosphate = DNA(n+1) + diphosphate. Functionally, required for replicative DNA synthesis. This DNA polymerase also exhibits 3' to 5' exonuclease activity. This Thermotoga petrophila (strain ATCC BAA-488 / DSM 13995 / JCM 10881 / RKU-1) protein is DNA polymerase III PolC-type.